A 361-amino-acid chain; its full sequence is Chorismate synthase (361 aa).

2 residues coordinate NADP(+): Arg-48 and Arg-54. Residues 125–127, 238–239, Gly-278, 293–297, and Arg-319 each bind FMN; these read RSS, NA, and KPTSS.

It belongs to the chorismate synthase family. In terms of assembly, homotetramer. The cofactor is FMNH2.

The enzyme catalyses 5-O-(1-carboxyvinyl)-3-phosphoshikimate = chorismate + phosphate. It participates in metabolic intermediate biosynthesis; chorismate biosynthesis; chorismate from D-erythrose 4-phosphate and phosphoenolpyruvate: step 7/7. In terms of biological role, catalyzes the anti-1,4-elimination of the C-3 phosphate and the C-6 proR hydrogen from 5-enolpyruvylshikimate-3-phosphate (EPSP) to yield chorismate, which is the branch point compound that serves as the starting substrate for the three terminal pathways of aromatic amino acid biosynthesis. This reaction introduces a second double bond into the aromatic ring system. This chain is Chorismate synthase, found in Vibrio cholerae serotype O1 (strain ATCC 39541 / Classical Ogawa 395 / O395).